We begin with the raw amino-acid sequence, 260 residues long: Imidazole glycerol phosphate synthase subunit HisF (260 aa).

Catalysis depends on residues Asp11 and Asp130.

This sequence belongs to the HisA/HisF family. Heterodimer of HisH and HisF.

The protein localises to the cytoplasm. It catalyses the reaction 5-[(5-phospho-1-deoxy-D-ribulos-1-ylimino)methylamino]-1-(5-phospho-beta-D-ribosyl)imidazole-4-carboxamide + L-glutamine = D-erythro-1-(imidazol-4-yl)glycerol 3-phosphate + 5-amino-1-(5-phospho-beta-D-ribosyl)imidazole-4-carboxamide + L-glutamate + H(+). The protein operates within amino-acid biosynthesis; L-histidine biosynthesis; L-histidine from 5-phospho-alpha-D-ribose 1-diphosphate: step 5/9. Its function is as follows. IGPS catalyzes the conversion of PRFAR and glutamine to IGP, AICAR and glutamate. The HisF subunit catalyzes the cyclization activity that produces IGP and AICAR from PRFAR using the ammonia provided by the HisH subunit. The polypeptide is Imidazole glycerol phosphate synthase subunit HisF (Psychrobacter cryohalolentis (strain ATCC BAA-1226 / DSM 17306 / VKM B-2378 / K5)).